A 284-amino-acid polypeptide reads, in one-letter code: Protoheme IX farnesyltransferase (284 aa).

The next 9 helical transmembrane spans lie at 2 to 19 (SLVV…PVTV), 23 to 45 (IALT…NMWS), 69 to 89 (GEAL…LGLA), 92 to 112 (LFAA…YSMW), 121 to 141 (IVIG…VATG), 148 to 168 (LFMF…LALF), 194 to 214 (VLVY…TGTG), 217 to 237 (LYLA…VRTW), and 263 to 283 (LFLH…GLGG).

This sequence belongs to the UbiA prenyltransferase family. Protoheme IX farnesyltransferase subfamily. As to quaternary structure, interacts with CtaA.

Its subcellular location is the cell inner membrane. The enzyme catalyses heme b + (2E,6E)-farnesyl diphosphate + H2O = Fe(II)-heme o + diphosphate. Its pathway is porphyrin-containing compound metabolism; heme O biosynthesis; heme O from protoheme: step 1/1. In terms of biological role, converts heme B (protoheme IX) to heme O by substitution of the vinyl group on carbon 2 of heme B porphyrin ring with a hydroxyethyl farnesyl side group. The sequence is that of Protoheme IX farnesyltransferase from Cereibacter sphaeroides (Rhodobacter sphaeroides).